A 300-amino-acid polypeptide reads, in one-letter code: CDP-diacylglycerol--serine O-phosphatidyltransferase (300 aa).

A run of 6 helical transmembrane segments spans residues 10 to 30 (AVNL…AGLT), 74 to 94 (IDSL…LYAT), 95 to 115 (MLST…CVVL), 135 to 155 (EFFV…LLAL), 162 to 182 (GWWT…MLLI), and 207 to 227 (LAIF…VIIL).

It belongs to the CDP-alcohol phosphatidyltransferase class-I family.

The protein localises to the cell membrane. It carries out the reaction a CDP-1,2-diacyl-sn-glycerol + L-serine = a 1,2-diacyl-sn-glycero-3-phospho-L-serine + CMP + H(+). In Mycobacterium leprae (strain TN), this protein is CDP-diacylglycerol--serine O-phosphatidyltransferase (pssA).